Here is a 153-residue protein sequence, read N- to C-terminus: Calmodulin-like protein 4 (153 aa).

4 consecutive EF-hand domains span residues aspartate 8–cysteine 43, proline 44–glutamine 79, aspartate 81–lysine 116, and leucine 117–aspartate 152.

The protein belongs to the calmodulin family. As to quaternary structure, associates with the IMAC/intermicrovillar adhesion complex.

It localises to the cell projection. It is found in the microvillus. Functionally, as part of the intermicrovillar adhesion complex/IMAC plays a role in epithelial brush border differentiation, controlling microvilli organization and length. Acts as a light chain for MYO7B and is required for efficient targeting of the IMAC to the tips of border brush microvilli. This chain is Calmodulin-like protein 4 (calml4), found in Xenopus tropicalis (Western clawed frog).